We begin with the raw amino-acid sequence, 1203 residues long: Potassium/sodium hyperpolarization-activated cyclic nucleotide-gated channel 4 (1203 aa).

A disordered region spans residues 1–182 (MDKLPPSMRK…QPASASCEQP (182 aa)). Residues 1 to 263 (MDKLPPSMRK…IIHPYSDFRF (263 aa)) lie on the Cytoplasmic side of the membrane. A compositionally biased stretch (acidic residues) spans 26-36 (MDEEEDAEEEG). A compositionally biased stretch (gly residues) spans 105–117 (SRGGGSGGTGSGS). Basic and acidic residues predominate over residues 121-133 (HLHDSAEERRLIA). Serine 138 is subject to Phosphoserine. The span at 163 to 174 (ASPPPPQQPPQP) shows a compositional bias: pro residues. The tract at residues 209–260 (GQAGFMQRQFGAMLQPGVNKFSLRMFGSQKAVEREQERVKSAGFWIIHPYSD) is involved in subunit assembly. Residues 264–286 (YWDLTMLLLMVGNLIIIPVGITF) traverse the membrane as a helical segment. Residues 287–293 (FKDENTT) lie on the Extracellular side of the membrane. A helical transmembrane segment spans residues 294–314 (PWIVFNVVSDTFFLIDLVLNF). The Cytoplasmic portion of the chain corresponds to 315–336 (RTGIVVEDNTEIILDPQRIKMK). A helical transmembrane segment spans residues 337–359 (YLKSWFMVDFISSIPVDYIFLIV). At 360-378 (ETRIDSEVYKTARALRIVR) the chain is on the extracellular side. A helical; Voltage-sensor transmembrane segment spans residues 379–399 (FTKILSLLRLLRLSRLIRYIH). The Cytoplasmic segment spans residues 400 to 413 (QWEEIFHMTYDLAS). Residues 414–436 (AVVRIVNLIGMMLLLCHWDGCLQ) form a helical membrane-spanning segment. Topologically, residues 437–464 (FLVPMLQDFPDDCWVSINNMVNNSWGKQ) are extracellular. Residue asparagine 458 is glycosylated (N-linked (GlcNAc...) asparagine). The segment at residues 465-486 (YSYALFKAMSHMLCIGYGRQAP) is an intramembrane region (pore-forming). At 487 to 491 (VGMSD) the chain is on the extracellular side. A helical transmembrane segment spans residues 492–517 (VWLTMLSMIVGATCYAMFIGHATALI). Residues 518-1203 (QSLDSSRRQY…PVRSKLPSNL (686 aa)) are Cytoplasmic-facing. 3',5'-cyclic GMP contacts are provided by tyrosine 559, lysine 562, phenylalanine 564, and glutamate 566. Glycine 659, glutamate 660, cysteine 662, arginine 669, threonine 670, valine 673, and arginine 710 together coordinate 3',5'-cyclic AMP. 3 disordered regions span residues 836 to 856 (ALGSASPASSPSQVDTPSSSS), 870 to 897 (GLSPLLPSSSSSPPPGACGSPSAPTPSA), and 918 to 1203 (LSSS…PSNL). 2 stretches are compositionally biased toward low complexity: residues 918–941 (LSSSDSPLLTPLQPGARSPQAAQP) and 966–986 (RSPSSSPGQLGQPPGELSLGL). Positions 995-1004 (ETPPRQPEPP) are enriched in pro residues. Low complexity predominate over residues 1005–1028 (SLVAGASGGASPVGFTPRGGLSPP). A compositionally biased stretch (pro residues) spans 1029 to 1042 (GHSPGPPRTFPSAP). The segment covering 1045–1056 (ASGSHGSLLLPP) has biased composition (low complexity). Phosphoserine is present on residues serine 1105 and serine 1108. Over residues 1122–1137 (AGGGSGGSGSSGGLGP) the composition is skewed to gly residues.

Belongs to the potassium channel HCN family. As to quaternary structure, homotetramer. The channel assemble into homotetramers or heteromeric complexes that contains of four pore-forming subunits. Interacts with PEX5L with a 4:4 HCN4:PEX5L stoichiometry; reduces the effects of cAMP on the voltage-dependence and rate of activation. Interacts with IRAG1; regulates HCN4 channel activity. Interacts with IRAG2; regulates HCN4 channel activity. In terms of processing, S-palmitoylated. As to expression, highly expressed in thalamus, testis and in heart, both in ventricle and atrium. Detected at much lower levels in amygdala, substantia nigra, cerebellum and hippocampus.

It is found in the cell membrane. The enzyme catalyses K(+)(in) = K(+)(out). It catalyses the reaction Na(+)(in) = Na(+)(out). Its activity is regulated as follows. Activated by cAMP and to a lesser extent by cGMP and cCMP. cAMP binding causes a conformation change that leads to the assembly of an active tetramer and channel opening. Binding of cAMP removes a tonic inhibition conferred by cyclic nucleotide-binding domain (CNBD) on channel opening. Cyclic dinucleotides can modulate HCN4 channel; cyclic dinucleotides acting as potent antagonists of cAMP. Inhibited by extracellular Cs(+) ions. Auxiliary subunits can also regulate HCN4 channel. IRAG1 causes a gain-of-function by shifting HCN4 activation to more depolarized membrane potentials in the absence of cAMP. In contrast, IRAG2 causes a loss-of-function by inhibiting cAMP-dependent potentiation of HCN4 activation. Its function is as follows. Hyperpolarization-activated ion channel that are permeable to Na(+) and K(+) ions with very slow activation and inactivation. Exhibits higher selectivity for K(+) over Na(+) ions. Contributes to the native pacemaker currents in heart (If) that regulate the rhythm of heart beat. Contributes to the native pacemaker currents in neurons (Ih). May mediate responses to sour stimuli. This chain is Potassium/sodium hyperpolarization-activated cyclic nucleotide-gated channel 4, found in Homo sapiens (Human).